The sequence spans 431 residues: Protein SHQ1 homolog (431 aa).

Belongs to the SHQ1 family.

Functionally, required for the quantitative accumulation of H/ACA ribonucleoproteins (RNPs). This chain is Protein SHQ1 homolog, found in Caenorhabditis elegans.